We begin with the raw amino-acid sequence, 135 residues long: Histone H3 type 3 (135 aa).

The tract at residues 1 to 40 is disordered; the sequence is MARTKQTARKSTGGKAPRKQLATKAARKTPATGGVKKPHR. Lysine 5 is modified (N6-methyllysine). Position 10 is an N6-acetyllysine; alternate (lysine 10). An N6-methyllysine; alternate modification is found at lysine 10. The residue at position 11 (serine 11) is a Phosphoserine. At threonine 12 the chain carries Phosphothreonine. N6-acetyllysine is present on residues lysine 15, lysine 19, and lysine 24. Residue lysine 28 is modified to N6-acetyllysine; alternate. N6-methyllysine; alternate is present on lysine 28. An N6-methyllysine mark is found at lysine 36 and lysine 37.

The protein belongs to the histone H3 family. As to quaternary structure, the nucleosome is a histone octamer containing two molecules each of H2A, H2B, H3 and H4 assembled in one H3-H4 heterotetramer and two H2A-H2B heterodimers. The octamer wraps approximately 147 bp of DNA. Post-translationally, acetylation is generally linked to gene activation. Acetylated to form H3K9ac (11%), H3K14ac (17%), H3K18ac (11%), H3K23ac (16%) and H3K27ac (7%). H3K4, H3K35 and H3K36 are not acetylated. H3K4me prevents acetylation. 32% of the histone H3 are acetylated with, on average, 2.4 acetyl-Lys. They are all continuously deacatylated and re-acetylated with a half-life of approximately 2 minutes. Monomethylated to form H3K4me1 (81%), H3K9me1 (16%), H3K27me1 (25%), H3K35me1 (25%) and H3K36me1 (5%). No methylation at H3K14, H3K18 and H3K23. Methylated by a protein complex that includes Mut11. Set1 methylates specifically H3K4. H3K4me1 is associated with silenced euchromatin. Set3 forms H3K9me1, while H3K9me2 is undetected. H3K9me1 is specifically associated with silent, multi-copy transgenes. In terms of processing, no phosphorylation detected.

The protein resides in the nucleus. It is found in the chromosome. Its function is as follows. Core component of nucleosome. Nucleosomes wrap and compact DNA into chromatin, limiting DNA accessibility to the cellular machineries which require DNA as a template. Histones thereby play a central role in transcription regulation, DNA repair, DNA replication and chromosomal stability. DNA accessibility is regulated via a complex set of post-translational modifications of histones, also called histone code, and nucleosome remodeling. This Chlamydomonas reinhardtii (Chlamydomonas smithii) protein is Histone H3 type 3 (ch3-IV).